Reading from the N-terminus, the 216-residue chain is Elongation factor 1-beta (216 aa).

Residues 71–131 form a disordered region; the sequence is GQASGVSASS…AKKKESGKSS (61 aa). A compositionally biased stretch (low complexity) spans 73 to 89; it reads ASGVSASSAPAAAAPAA. The span at 92–107 shows a compositional bias: acidic residues; that stretch reads DEDDDDDMDLFGDETE. Basic and acidic residues predominate over residues 108–128; it reads EDKKAAAEREAAKPAKKKESG.

Belongs to the EF-1-beta/EF-1-delta family. EF-1 is composed of 4 subunits: alpha, beta (1B-alpha=beta'), delta (1B-beta), and gamma (1B-gamma).

Its function is as follows. EF-1-beta and EF-1-beta' stimulate the exchange of GDP bound to EF-1-alpha to GTP. This is Elongation factor 1-beta from Triticum aestivum (Wheat).